The sequence spans 238 residues: Orotidine 5'-phosphate decarboxylase (238 aa).

Substrate contacts are provided by residues D10, K32, 59–68 (DLKLHDIPNT), T122, R184, Q193, G213, and R214. K61 serves as the catalytic Proton donor.

It belongs to the OMP decarboxylase family. Type 1 subfamily. As to quaternary structure, homodimer.

It catalyses the reaction orotidine 5'-phosphate + H(+) = UMP + CO2. It functions in the pathway pyrimidine metabolism; UMP biosynthesis via de novo pathway; UMP from orotate: step 2/2. Functionally, catalyzes the decarboxylation of orotidine 5'-monophosphate (OMP) to uridine 5'-monophosphate (UMP). This is Orotidine 5'-phosphate decarboxylase from Bacillus cereus (strain ATCC 10987 / NRS 248).